The sequence spans 88 residues: MPKPDIHPTWYPDAKVICNGEVVMTTGSTQPEINVDVWSGNHPFFTGTQKILDTEGRVDRFMRKYGMGSVDNATSEKKSATDETSKES.

A disordered region spans residues 67–88 (MGSVDNATSEKKSATDETSKES). The segment covering 74-88 (TSEKKSATDETSKES) has biased composition (basic and acidic residues).

Belongs to the bacterial ribosomal protein bL31 family. Type A subfamily. In terms of assembly, part of the 50S ribosomal subunit.

Functionally, binds the 23S rRNA. The chain is Large ribosomal subunit protein bL31 from Synechococcus sp. (strain CC9311).